A 561-amino-acid polypeptide reads, in one-letter code: Putative transport protein Ent638_1362 (561 aa).

The next 5 helical transmembrane spans lie at 8 to 28 (LLNG…LCLG), 32 to 52 (LGSV…LLGQ), 66 to 86 (FMLF…SIFF), 94 to 114 (MLAL…GKLF), and 158 to 178 (HLSL…IVAA). 2 RCK C-terminal domains span residues 202–288 (LDTD…SFRN) and 292–373 (VFDR…RIGF). The next 5 membrane-spanning stretches (helical) occupy residues 383-403 (LLAF…TFQF), 406-426 (FSFG…LGFL), 447-467 (FGLM…IGHS), 475-495 (MLVA…LFGA), and 540-560 (AIAN…WPGL).

This sequence belongs to the AAE transporter (TC 2.A.81) family. YbjL subfamily.

The protein resides in the cell membrane. The chain is Putative transport protein Ent638_1362 from Enterobacter sp. (strain 638).